We begin with the raw amino-acid sequence, 225 residues long: MHLDHHHESAAAVSADARRPDGSRRALRIGLGGPVGSGKTATVAALCRALRAELSLAVVTNDIYTREDAEFLLREAVLPPERITAVETGACPHTAIRDDISANLEAVEDLEDEVGPLDLVLVESGGDNLTATFSRGLVDAQVFVIDVAGGDDIPRKGGPGVATADLLIVNKTDLAPYVGSDLARMAADAKAARGELPVVLQSLRGEDGVREVADWVRERIAAWTA.

The segment at 1–21 is disordered; that stretch reads MHLDHHHESAAAVSADARRPD. 33–40 serves as a coordination point for GTP; sequence GPVGSGKT.

The protein belongs to the SIMIBI class G3E GTPase family. UreG subfamily. As to quaternary structure, homodimer. UreD, UreF and UreG form a complex that acts as a GTP-hydrolysis-dependent molecular chaperone, activating the urease apoprotein by helping to assemble the nickel containing metallocenter of UreC. The UreE protein probably delivers the nickel.

It localises to the cytoplasm. Functionally, facilitates the functional incorporation of the urease nickel metallocenter. This process requires GTP hydrolysis, probably effectuated by UreG. The protein is Urease accessory protein UreG of Streptomyces coelicolor (strain ATCC BAA-471 / A3(2) / M145).